A 566-amino-acid chain; its full sequence is 4-coumarate--CoA ligase-like 6 (566 aa).

A disordered region spans residues 1–21 (MAATHLHIPPNPKTQTSHQNP). Residues S212, S213, G214, T215, T216, and K220 each coordinate ATP. (E)-4-coumaroyl-AMP is bound at residue Y263. R284 lines the CoA pocket. An SBD1 region spans residues 286–356 (DASDVVNVIE…QTLPHVDLIQ (71 aa)). Residues A334, Q356, G357, and T361 each coordinate (E)-4-coumaroyl-AMP. ATP is bound by residues Q356, G357, T361, D442, and R457. Residues 357-421 (GYGMTESTAV…IQGPGVMKGY (65 aa)) form an SBD2 region. Residues K459 and K463 each coordinate (E)-4-coumaroyl-AMP. 2 residues coordinate CoA: K465 and G466. Position 548 (K548) interacts with ATP. A Microbody targeting signal motif is present at residues 564–566 (SRL).

This sequence belongs to the ATP-dependent AMP-binding enzyme family. Requires Mg(2+) as cofactor. As to expression, expressed at very low level in leaves.

The protein resides in the peroxisome. It carries out the reaction (E)-4-coumarate + ATP + CoA = (E)-4-coumaroyl-CoA + AMP + diphosphate. The catalysed reaction is (E)-4-coumarate + ATP + H(+) = (E)-4-coumaroyl-AMP + diphosphate. It catalyses the reaction (E)-4-coumaroyl-AMP + CoA = (E)-4-coumaroyl-CoA + AMP + H(+). The enzyme catalyses (E)-ferulate + ATP + CoA = (E)-feruloyl-CoA + AMP + diphosphate. It carries out the reaction (E)-ferulate + ATP + H(+) = (E)-feruloyl-AMP + diphosphate. The catalysed reaction is (E)-feruloyl-AMP + CoA = (E)-feruloyl-CoA + AMP + H(+). It catalyses the reaction (E)-caffeate + ATP + CoA = (E)-caffeoyl-CoA + AMP + diphosphate. The enzyme catalyses (E)-caffeate + ATP + H(+) = (E)-caffeoyl-AMP + diphosphate. It carries out the reaction (E)-caffeoyl-AMP + CoA = (E)-caffeoyl-CoA + AMP + H(+). The catalysed reaction is (E)-cinnamate + ATP + CoA = (E)-cinnamoyl-CoA + AMP + diphosphate. It catalyses the reaction 4-hydroxybenzoate + ATP + CoA = 4-hydroxybenzoyl-CoA + AMP + diphosphate. The enzyme catalyses tetradecanoate + ATP + CoA = tetradecanoyl-CoA + AMP + diphosphate. It carries out the reaction hexanoate + ATP + CoA = hexanoyl-CoA + AMP + diphosphate. The catalysed reaction is heptanoate + ATP + CoA = heptanoyl-CoA + AMP + diphosphate. Contributes to jasmonic acid biosynthesis by initiating the beta-oxidative chain shortening of its precursors. Acts as a carboxylate--CoA ligase that can use preferentially p-coumarate, ferulate and caffeate as substrates and, with a lower efficiency, (E)-cinnamate and 4-hydroxybenzoate as substrates. Involved in the biosynthesis of ubiquinone from phenylalanine by activating the propyl side chain of 4-coumarate, and possibly trans-cinnamate and 4-hydroxybenzoate, for subsequent beta-oxidative shortening and the formation of the benzenoid moiety of ubiquinone. Follows a two-step reaction mechanism, wherein the carboxylate substrate first undergoes adenylation by ATP, followed by a thioesterification in the presence of CoA to yield the final CoA thioester. The polypeptide is 4-coumarate--CoA ligase-like 6 (Arabidopsis thaliana (Mouse-ear cress)).